The sequence spans 122 residues: Large ribosomal subunit protein uL14 (122 aa).

This sequence belongs to the universal ribosomal protein uL14 family. In terms of assembly, part of the 50S ribosomal subunit. Forms a cluster with proteins L3 and L19. In the 70S ribosome, L14 and L19 interact and together make contacts with the 16S rRNA in bridges B5 and B8.

Binds to 23S rRNA. Forms part of two intersubunit bridges in the 70S ribosome. The polypeptide is Large ribosomal subunit protein uL14 (Dechloromonas aromatica (strain RCB)).